We begin with the raw amino-acid sequence, 282 residues long: Bis(5'-nucleosyl)-tetraphosphatase, symmetrical (282 aa).

Belongs to the Ap4A hydrolase family. As to quaternary structure, monomer.

It catalyses the reaction P(1),P(4)-bis(5'-adenosyl) tetraphosphate + H2O = 2 ADP + 2 H(+). In terms of biological role, hydrolyzes diadenosine 5',5'''-P1,P4-tetraphosphate to yield ADP. This is Bis(5'-nucleosyl)-tetraphosphatase, symmetrical from Escherichia coli O157:H7.